The primary structure comprises 120 residues: Ribonuclease P protein component (120 aa).

Belongs to the RnpA family. As to quaternary structure, consists of a catalytic RNA component (M1 or rnpB) and a protein subunit.

It catalyses the reaction Endonucleolytic cleavage of RNA, removing 5'-extranucleotides from tRNA precursor.. Its function is as follows. RNaseP catalyzes the removal of the 5'-leader sequence from pre-tRNA to produce the mature 5'-terminus. It can also cleave other RNA substrates such as 4.5S RNA. The protein component plays an auxiliary but essential role in vivo by binding to the 5'-leader sequence and broadening the substrate specificity of the ribozyme. The protein is Ribonuclease P protein component of Mycobacterium leprae (strain Br4923).